A 129-amino-acid polypeptide reads, in one-letter code: uncharacterized protein (129 aa).

A helical membrane pass occupies residues 77–97 (ILAVFIISFIIVVVGVLLLGL). Residues 109-129 (SSNDKKLQSNDEEKQALAEKA) are disordered. Residues 111–129 (NDKKLQSNDEEKQALAEKA) are compositionally biased toward basic and acidic residues.

It is found in the vacuole membrane. This is an uncharacterized protein from Saccharomyces cerevisiae (strain ATCC 204508 / S288c) (Baker's yeast).